The sequence spans 599 residues: MDKKFIRNFSIIAHIDHGKSTLSDRIIEFTNTLSKREMTNQILDSMDIERERGITIKLNAVQIKYHAKDKHEYLIHLIDTPGHVDFTYEVSRSLAACEGAILVVDAAQGIEAQTLSNVYLALENNLEIVPTINKIDLPSADPNRVKKEIEDVIGLDTADVPLISAKTGLNIQDVLEAIIKHVPPPLDAKDDAKLQALIFDSFYDSYKGVVCLVRVKQGTIKVGDKIRMMANNKDYIVSELGIRTPKIVNKTELVAGEVGWVAAAIKTVKDINVGDTITHTNNPADKPLPGYKKILPMVYCGLYPIDTSQYDDLKEAMAKISLSDAALTYEYETSQALGFGIRCGFLGLLHMDVIRERIAREFNIELILTAPSVIYKIELTNNQEISIDSPAKMPEPTSIKLIKEPFVKLAIITPDNYVGAIMELCQSRRGIYDDLEVIDGTRRKLIYKMPLAEIMYSFFDSLKSITKGYATMDYELIGYQAEKLVKIDIMLNGNKVDALSIIAHRDFAYGKSKIICERLKEVIPKHQFEIPIQASIGSKIIARETIKAVRKDVIAKCYGGDVSRKKKLLEQQKEGKKRLKAIGNVDVPQDAFVKVLSEN.

One can recognise a tr-type G domain in the interval 4–186 (KFIRNFSIIA…AIIKHVPPPL (183 aa)). Residues 16 to 21 (DHGKST) and 133 to 136 (NKID) each bind GTP.

The protein belongs to the TRAFAC class translation factor GTPase superfamily. Classic translation factor GTPase family. LepA subfamily.

The protein localises to the cell membrane. It catalyses the reaction GTP + H2O = GDP + phosphate + H(+). Required for accurate and efficient protein synthesis under certain stress conditions. May act as a fidelity factor of the translation reaction, by catalyzing a one-codon backward translocation of tRNAs on improperly translocated ribosomes. Back-translocation proceeds from a post-translocation (POST) complex to a pre-translocation (PRE) complex, thus giving elongation factor G a second chance to translocate the tRNAs correctly. Binds to ribosomes in a GTP-dependent manner. This Ureaplasma parvum serovar 3 (strain ATCC 27815 / 27 / NCTC 11736) protein is Elongation factor 4.